The chain runs to 101 residues: Ascorbate-specific PTS system EIIB component (101 aa).

In terms of domain architecture, PTS EIIB type-2 spans methionine 1 to valine 100. The active-site Phosphocysteine intermediate is cysteine 9. Cysteine 9 is modified (phosphocysteine).

The protein localises to the cytoplasm. The enzyme catalyses N(pros)-phospho-L-histidyl-[protein] + L-ascorbate(out) = L-ascorbate 6-phosphate(in) + L-histidyl-[protein]. The phosphoenolpyruvate-dependent sugar phosphotransferase system (sugar PTS), a major carbohydrate active transport system, catalyzes the phosphorylation of incoming sugar substrates concomitantly with their translocation across the cell membrane. The enzyme II UlaABC PTS system is involved in ascorbate transport. In Escherichia coli O157:H7, this protein is Ascorbate-specific PTS system EIIB component (ulaB).